The chain runs to 366 residues: Putative transcription factor PHD1 (366 aa).

An HTH APSES-type domain is found at 186–292 (RVITTMWEDE…KDIESIVDAR (107 aa)). The H-T-H motif DNA-binding region spans 220–241 (GTKLLNVTKMTRGRRDGILRSE). Positions 294–366 (PSNKASLTPK…QTSRAKNELS (73 aa)) are disordered. Over residues 312-328 (EPSDNKHEIATEIKPKS) the composition is skewed to basic and acidic residues.

Belongs to the EFG1/PHD1/stuA family.

The protein resides in the nucleus. In terms of biological role, putative transcription factor that functions in pseudohyphal growth. The chain is Putative transcription factor PHD1 (PHD1) from Saccharomyces cerevisiae (strain ATCC 204508 / S288c) (Baker's yeast).